A 194-amino-acid chain; its full sequence is Protein GrpE (194 aa).

The disordered stretch occupies residues 1 to 39; it reads MTNHEQDQQDNSELLDDDQVTLESQQAADSGAEAPASDD. Residues 8–20 show a composition bias toward acidic residues; the sequence is QQDNSELLDDDQV.

The protein belongs to the GrpE family. Homodimer.

The protein resides in the cytoplasm. Participates actively in the response to hyperosmotic and heat shock by preventing the aggregation of stress-denatured proteins, in association with DnaK and GrpE. It is the nucleotide exchange factor for DnaK and may function as a thermosensor. Unfolded proteins bind initially to DnaJ; upon interaction with the DnaJ-bound protein, DnaK hydrolyzes its bound ATP, resulting in the formation of a stable complex. GrpE releases ADP from DnaK; ATP binding to DnaK triggers the release of the substrate protein, thus completing the reaction cycle. Several rounds of ATP-dependent interactions between DnaJ, DnaK and GrpE are required for fully efficient folding. In Saccharophagus degradans (strain 2-40 / ATCC 43961 / DSM 17024), this protein is Protein GrpE.